A 267-amino-acid chain; its full sequence is Exodeoxyribonuclease III (267 aa).

E34 serves as a coordination point for Mg(2+). The active site involves Y109. Positions 151, 153, and 258 each coordinate Mg(2+). Catalysis depends on D151, which acts as the Proton donor/acceptor.

Belongs to the DNA repair enzymes AP/ExoA family. In terms of assembly, monomer. The cofactor is Mg(2+). Mn(2+) is required as a cofactor.

The enzyme catalyses Exonucleolytic cleavage in the 3'- to 5'-direction to yield nucleoside 5'-phosphates.. In terms of biological role, major apurinic-apyrimidinic endonuclease of E.coli. It removes the damaged DNA at cytosines and guanines by cleaving on the 3'-side of the AP site by a beta-elimination reaction. The sequence is that of Exodeoxyribonuclease III (xthA) from Haemophilus influenzae (strain ATCC 51907 / DSM 11121 / KW20 / Rd).